Here is a 156-residue protein sequence, read N- to C-terminus: Small ribosomal subunit protein uS7 (156 aa).

This sequence belongs to the universal ribosomal protein uS7 family. In terms of assembly, part of the 30S ribosomal subunit. Contacts proteins S9 and S11.

In terms of biological role, one of the primary rRNA binding proteins, it binds directly to 16S rRNA where it nucleates assembly of the head domain of the 30S subunit. Is located at the subunit interface close to the decoding center, probably blocks exit of the E-site tRNA. The chain is Small ribosomal subunit protein uS7 from Desulforudis audaxviator (strain MP104C).